Reading from the N-terminus, the 51-residue chain is Ovomucoid (51 aa).

The region spanning 3-51 (VDCSGYPKPACTLEYFPLCGSDNQTYANKCTFCNAVVEKNVTLNHLGEC) is the Kazal-like domain. 3 disulfide bridges follow: cysteine 5–cysteine 35, cysteine 13–cysteine 32, and cysteine 21–cysteine 51. N-linked (GlcNAc...) asparagine glycosylation occurs at asparagine 42.

It localises to the secreted. The sequence is that of Ovomucoid from Nothoprocta perdicaria (Chilean tinamou).